The following is a 369-amino-acid chain: Fructose-bisphosphate aldolase 2 (369 aa).

Residue Asp40 coordinates dihydroxyacetone phosphate. D-glyceraldehyde 3-phosphate-binding residues include Ser42 and Thr45. Position 49 (Arg49) interacts with beta-D-fructose 1,6-bisphosphate. Lys113 contacts D-glyceraldehyde 3-phosphate. Position 152 (Lys152) interacts with dihydroxyacetone phosphate. Residue Glu195 participates in D-glyceraldehyde 3-phosphate binding. The active-site Proton acceptor is Glu195. Residues Lys237, Ser279, and Gly280 each coordinate dihydroxyacetone phosphate. Lys237 acts as the Schiff-base intermediate with dihydroxyacetone phosphate in catalysis. Beta-D-fructose 1,6-bisphosphate-binding positions include 279 to 281 and Ser307; that span reads SGG. Residues Gly309 and Arg310 each coordinate dihydroxyacetone phosphate. Position 310 (Arg310) interacts with beta-D-fructose 1,6-bisphosphate.

The protein belongs to the class I fructose-bisphosphate aldolase family.

It localises to the cytoplasm. The protein localises to the membrane. Its subcellular location is the host cell membrane. The enzyme catalyses beta-D-fructose 1,6-bisphosphate = D-glyceraldehyde 3-phosphate + dihydroxyacetone phosphate. Its pathway is carbohydrate degradation; glycolysis; D-glyceraldehyde 3-phosphate and glycerone phosphate from D-glucose: step 4/4. Its function is as follows. Plays a key role in glycolysis by catalyzing the cleavage of fructose 1,6-bisphosphate into dihydroxyacetone phosphate and glyceraldehyde 3-phosphate. The chain is Fructose-bisphosphate aldolase 2 (ALDO2) from Plasmodium berghei (strain Anka).